Reading from the N-terminus, the 267-residue chain is 5'-nucleotidase SurE (267 aa).

The a divalent metal cation site is built by Asp-9, Asp-10, Ser-40, and Asn-97.

This sequence belongs to the SurE nucleotidase family. Requires a divalent metal cation as cofactor.

The protein resides in the cytoplasm. It carries out the reaction a ribonucleoside 5'-phosphate + H2O = a ribonucleoside + phosphate. Its function is as follows. Nucleotidase that shows phosphatase activity on nucleoside 5'-monophosphates. This is 5'-nucleotidase SurE from Helicobacter pylori (strain P12).